Here is a 71-residue protein sequence, read N- to C-terminus: Putative RNA-binding regulatory peptide (71 aa).

Interacts with IGF2BP1 (via KH3 and KH4 domains); the interaction results in increased binding of IGF2BP1 to N6-methyladenosine (m6A)-containing mRNAs. As to expression, detected in colon (at protein level).

Functionally, enhances binding of IGF2BP1 to N6-methyladenosine (m6A)-containing mRNAs, thereby contributing to increased mRNA stability. Also increases the interaction of IGF2BP1 with RNA stabilizers ELAVL1/HUR, MATR3 and PABPC1, and increases the interaction of RNA stabilizers ELAVL1/HUR, MATR3 and PABPC1 with m6A-containing mRNAs. Contributes to MYC stability by enhancing binding of IGF2BP1 to m6A-containing MYC mRNAs and increasing recruitment of RNA stabilizing proteins to m6A-containing MYC mRNAs. The chain is Putative RNA-binding regulatory peptide from Homo sapiens (Human).